The sequence spans 101 residues: Large ribosomal subunit protein uL24 (101 aa).

The protein belongs to the universal ribosomal protein uL24 family. In terms of assembly, part of the 50S ribosomal subunit.

Its function is as follows. One of two assembly initiator proteins, it binds directly to the 5'-end of the 23S rRNA, where it nucleates assembly of the 50S subunit. In terms of biological role, one of the proteins that surrounds the polypeptide exit tunnel on the outside of the subunit. In Streptococcus pneumoniae (strain ATCC 700669 / Spain 23F-1), this protein is Large ribosomal subunit protein uL24.